Consider the following 434-residue polypeptide: MLKPLCVVIGTTGAGKSDLAVQLAKRFGSQVINADSMQIYRGFDTITNKITVEEQENVHHRLMSFLNFDKEYSVPEFERDASRVIDEIHSQGKIPIVVGGTHYYLQSLLFEDTTLSAIDKLTNDSSPSKPPHPDSHILDDDPSAMLSYLKKIDPVMAEQWHPRDTRKIRRSLEIYFHTGRPPSEIYSEQKMKSSGSKLRYKSLIFWAFADSLVLMPRLDKRVDKMLSHGLVDEIKSMKSLAESEKFSPDFTRGIWQCIGFKEFMPWFEAPSDIVFNDCLERMKVSTRQYAKSQKKWIQSRFLPMCLAQQDLSPSSILFSTTNTTDLNNWEEQVEKACRVFQYFFYNGDAIAPSADDQHAFEKARDYLSIMNGRQSQKKKFVCEECLDKRGDPFTVIGEDAFNVHIKSRKHKTTVRRKKERAERQIRLKNIGILK.

Residue 10–17 (GTTGAGKS) participates in ATP binding. 12–17 (TGAGKS) provides a ligand contact to substrate. Interaction with substrate tRNA stretches follow at residues 35–38 (DSMQ) and 166–170 (RKIRR). The tract at residues 211–233 (SLVLMPRLDKRVDKMLSHGLVDE) is interaction with isopentenylpyrophosphate transferase. Interaction with substrate tRNA stretches follow at residues 256 to 258 (QCI), 281 to 299 (RMKVSTRQYAKSQKKWIQS), and 291 to 298 (KSQKKWIQ). A Matrin-type zinc finger spans residues 380–416 (FVCEECLDKRGDPFTVIGEDAFNVHIKSRKHKTTVRR).

This sequence belongs to the IPP transferase family.

It is found in the mitochondrion. It localises to the cytoplasm. The protein localises to the nucleus. The catalysed reaction is adenosine(37) in tRNA + dimethylallyl diphosphate = N(6)-dimethylallyladenosine(37) in tRNA + diphosphate. Functionally, catalyzes the transfer of a dimethylallyl group onto the adenine at position 37 of both cytosolic and mitochondrial tRNAs, leading to the formation of N6-(dimethylallyl)adenosine (i(6)A). In Schizosaccharomyces pombe (strain 972 / ATCC 24843) (Fission yeast), this protein is tRNA dimethylallyltransferase (tit1).